The sequence spans 1116 residues: uncharacterized protein (1116 aa).

EF-hand domains are found at residues 8 to 43 (EEQT…SGLA), 42 to 77 (LAPQ…VALA), 166 to 201 (LSTE…INLL), and 292 to 327 (LPED…IKLK). 3 consecutive EH domains span residues 9 to 106 (EQTA…DSSK), 134 to 224 (EMTR…AAST), and 259 to 348 (DLTS…VAPL). Ca(2+)-binding residues include Asp-305, Asn-307, Asn-309, Lys-311, and Glu-316. Disordered stretches follow at residues 360-454 (PSVV…NSPT), 703-774 (SVNL…ASTV), 812-890 (TSLS…NTSA), 909-978 (PFAT…SPQI), 1004-1024 (TTTH…ENQY), 1044-1066 (SNEV…DDEL), and 1095-1116 (QAAE…AGHH). Residues 371–381 (NPNPTLAPNPT) show a composition bias toward pro residues. The span at 401-416 (FSPTLAPQHTSSNATK) shows a compositional bias: polar residues. The stretch at 565 to 707 (KAQTEQVNRE…EDGLKSVNLT (143 aa)) forms a coiled coil. Positions 723 to 749 (SFTSNGITTDKPTLPDTTSSVPTQHNS) are enriched in polar residues. Composition is skewed to low complexity over residues 755–774 (NTLR…ASTV) and 812–827 (TSLS…SLDS). A compositionally biased stretch (polar residues) spans 864 to 890 (SKLTGSARNTAEPVENTSAEPIENTSA). Acidic residues predominate over residues 957 to 969 (EIDDDESSSDEEP). Acidic residues-rich tracts occupy residues 1055-1066 (TANESDNDDDEL) and 1104-1116 (NSST…AGHH).

It is found in the cytoplasm. The protein resides in the cytoskeleton. This is an uncharacterized protein from Schizosaccharomyces pombe (strain 972 / ATCC 24843) (Fission yeast).